The primary structure comprises 287 residues: HTH-type transcriptional regulator MurR (287 aa).

Residues 1–77 form the HTH rpiR-type domain; sequence MLYLAKMRNA…MALIEEYSVN (77 aa). Positions 37 to 56 form a DNA-binding region, H-T-H motif; that stretch reads SRNLAKQLEVSQSSIVKFAQ. An SIS domain is found at 128 to 268; that stretch reads VINLISKARL…FVGMVQLNDV (141 aa).

As to quaternary structure, homotetramer.

The protein operates within amino-sugar metabolism; N-acetylmuramate degradation [regulation]. Represses the expression of the murPQ operon involved in the uptake and degradation of N-acetylmuramic acid (MurNAc). Binds to two adjacent inverted repeats within the operator region. MurNAc 6-phosphate, the substrate of MurQ, is the specific inducer that weakens binding of MurR to the operator. This is HTH-type transcriptional regulator MurR from Citrobacter koseri (strain ATCC BAA-895 / CDC 4225-83 / SGSC4696).